We begin with the raw amino-acid sequence, 478 residues long: Sugar transporter ERD6-like 18 (478 aa).

Helical transmembrane passes span isoleucine 31–valine 51, isoleucine 71–phenylalanine 91, leucine 110–phenylalanine 130, isoleucine 133–isoleucine 153, phenylalanine 162–serine 180, isoleucine 188–proline 208, threonine 270–leucine 290, isoleucine 306–valine 326, proline 333–phenylalanine 353, valine 367–leucine 387, isoleucine 407–leucine 427, and glycine 433–valine 453.

It belongs to the major facilitator superfamily. Sugar transporter (TC 2.A.1.1) family. Expressed in leaf vasculature, stem and flowers.

Its subcellular location is the membrane. Functionally, sugar transporter. The chain is Sugar transporter ERD6-like 18 (SFP2) from Arabidopsis thaliana (Mouse-ear cress).